The sequence spans 876 residues: Extended synaptotagmin-2-B (876 aa).

A disordered region spans residues 1 to 21; that stretch reads MASESGAEKGPPTTPAENGQP. At 1 to 35 the chain is on the cytoplasmic side; it reads MASESGAEKGPPTTPAENGQPGVPIAAAVAADEQG. The helical transmembrane segment at 36–56 threads the bilayer; it reads MISVDIAGLFYQFSKTFILIF. Topologically, residues 57–59 are lumenal; sequence PVY. A helical transmembrane segment spans residues 60 to 80; that stretch reads VLGYFGLSFSWLLIALVLLLW. Residues 81-876 are Cytoplasmic-facing; that stretch reads WRRNKGNKNS…EDGTRAAASS (796 aa). The region spanning 123-302 is the SMP-LTD domain; the sequence is DIERAEWLNK…LPNRITVPLV (180 aa). 2 C2 domains span residues 301–421 and 446–592; these read LVSD…DEWF and NLDQ…HLNN. 9 residues coordinate Ca(2+): lysine 332, aspartate 333, aspartate 345, aspartate 392, glutamate 393, aspartate 394, aspartate 396, aspartate 398, and aspartate 399. Residues 614-714 are disordered; that stretch reads VRSPDEQHTS…KEPTPSIASD (101 aa). The span at 636–656 shows a compositional bias: pro residues; it reads PPTPQMPAPSPAVAHKPPPTP. Residues 686 to 698 are compositionally biased toward low complexity; sequence SSSSLSGSSFTYS. Positions 741–863 constitute a C2 3 domain; sequence PLGQIQLTIR…DAAKGWTQWF (123 aa). A required for phosphatidylinositol 4,5-bisphosphate-dependent location at the cell membrane region spans residues 788-795; the sequence is KRRSGRRK.

This sequence belongs to the extended synaptotagmin family. As to quaternary structure, interacts with fgfr1 that has been activated by fgf1 binding. Interacts (via C2 domains) with the AP-2 complex (via an alpha subunit). Identified in a complex with the AP-2 complex and fgfr1.

It localises to the cell membrane. The protein localises to the endoplasmic reticulum membrane. Its function is as follows. Tethers the endoplasmic reticulum to the cell membrane and promotes the formation of appositions between the endoplasmic reticulum and the cell membrane. Binds glycerophospholipids in a barrel-like domain and may play a role in cellular lipid transport. Plays a role in the rapid internalization of fgfr1 that has been activated by fgf1 binding; this occurs most likely via the AP-2 complex. Required for normal fgf signaling and the activation of downstream signaling cascades via its role in the internalization of activated fgfr1. Required for normal embryonic development via its role in fgf signaling and the downstream regulation of t/xBRA expression. The chain is Extended synaptotagmin-2-B (esyt2-b) from Xenopus laevis (African clawed frog).